Consider the following 45-residue polypeptide: Proteinase inhibitor IIA (45 aa).

Disulfide bonds link C10–C24, C14–C35, and C20–C43.

The protein belongs to the protease inhibitor I20 (potato type II proteinase inhibitor) family.

The protein resides in the secreted. In terms of biological role, inhibits trypsin strongly and chymotrypsin temporarily. The protein is Proteinase inhibitor IIA of Solanum tuberosum (Potato).